The chain runs to 296 residues: GTPase Era (296 aa).

The region spanning 3 to 170 is the Era-type G domain; the sequence is KSGFITIVGR…LELMVKYLPE (168 aa). The G1 stretch occupies residues 11-18; sequence GRPNVGKS. 11–18 is a GTP binding site; sequence GRPNVGKS. A G2 region spans residues 37–41; that stretch reads QTTRN. Positions 58–61 are G3; that stretch reads DTPG. GTP is bound by residues 58-62 and 120-123; these read DTPGI and NKVD. The G4 stretch occupies residues 120–123; the sequence is NKVD. The segment at 149 to 151 is G5; sequence ISA. The KH type-2 domain maps to 201–278; the sequence is LSQEVPHGIA…NIKIWVKVRK (78 aa).

This sequence belongs to the TRAFAC class TrmE-Era-EngA-EngB-Septin-like GTPase superfamily. Era GTPase family. In terms of assembly, monomer.

The protein resides in the cytoplasm. It is found in the cell membrane. Its function is as follows. An essential GTPase that binds both GDP and GTP, with rapid nucleotide exchange. Plays a role in 16S rRNA processing and 30S ribosomal subunit biogenesis and possibly also in cell cycle regulation and energy metabolism. This Clostridium perfringens (strain ATCC 13124 / DSM 756 / JCM 1290 / NCIMB 6125 / NCTC 8237 / Type A) protein is GTPase Era.